The following is a 428-amino-acid chain: CinA-like protein (428 aa).

This sequence belongs to the CinA family.

The polypeptide is CinA-like protein (Endomicrobium trichonymphae).